The following is a 233-amino-acid chain: Orotidine 5'-phosphate decarboxylase (233 aa).

Substrate is bound by residues aspartate 11, lysine 33, 60–69 (DLKFHDIPNT), threonine 120, arginine 181, glutamine 190, glycine 210, and arginine 211. The Proton donor role is filled by lysine 62.

Belongs to the OMP decarboxylase family. Type 1 subfamily. As to quaternary structure, homodimer.

The catalysed reaction is orotidine 5'-phosphate + H(+) = UMP + CO2. It functions in the pathway pyrimidine metabolism; UMP biosynthesis via de novo pathway; UMP from orotate: step 2/2. In terms of biological role, catalyzes the decarboxylation of orotidine 5'-monophosphate (OMP) to uridine 5'-monophosphate (UMP). This chain is Orotidine 5'-phosphate decarboxylase, found in Vibrio campbellii (strain ATCC BAA-1116).